The following is a 91-amino-acid chain: Small ribosomal subunit protein uS19 (91 aa).

The protein belongs to the universal ribosomal protein uS19 family.

Protein S19 forms a complex with S13 that binds strongly to the 16S ribosomal RNA. The chain is Small ribosomal subunit protein uS19 from Afipia carboxidovorans (strain ATCC 49405 / DSM 1227 / KCTC 32145 / OM5) (Oligotropha carboxidovorans).